The chain runs to 201 residues: Inosine triphosphate pyrophosphatase (201 aa).

Residue Thr16–Lys21 participates in ITP binding. A Mg(2+)-binding site is contributed by Glu44. ITP contacts are provided by residues Lys56, Asp72 to Thr73, Lys89, Phe148 to Asp151, Lys171, and His176 to Arg177.

This sequence belongs to the HAM1 NTPase family. In terms of assembly, homodimer. Mg(2+) serves as cofactor. The cofactor is Mn(2+).

Its subcellular location is the cytoplasm. The catalysed reaction is ITP + H2O = IMP + diphosphate + H(+). The enzyme catalyses dITP + H2O = dIMP + diphosphate + H(+). It catalyses the reaction XTP + H2O = XMP + diphosphate + H(+). Functionally, pyrophosphatase that hydrolyzes non-canonical purine nucleotides such as inosine triphosphate (ITP), deoxyinosine triphosphate (dITP) or xanthosine 5'-triphosphate (XTP) to their respective monophosphate derivatives. The enzyme does not distinguish between the deoxy- and ribose forms. Probably excludes non-canonical purines from RNA and DNA precursor pools, thus preventing their incorporation into RNA and DNA and avoiding chromosomal lesions. This is Inosine triphosphate pyrophosphatase from Zea mays (Maize).